We begin with the raw amino-acid sequence, 604 residues long: 2-isopropylmalate synthase 2, mitochondrial (604 aa).

The N-terminal 50 residues, M1–I50, are a transit peptide targeting the mitochondrion. In terms of domain architecture, Pyruvate carboxyltransferase spans P60–T335. D69, H274, H276, and N310 together coordinate a divalent metal cation.

This sequence belongs to the alpha-IPM synthase/homocitrate synthase family. LeuA type 2 subfamily. As to quaternary structure, homodimer. A divalent metal cation is required as a cofactor.

It localises to the mitochondrion. The enzyme catalyses 3-methyl-2-oxobutanoate + acetyl-CoA + H2O = (2S)-2-isopropylmalate + CoA + H(+). It participates in amino-acid biosynthesis; L-leucine biosynthesis; L-leucine from 3-methyl-2-oxobutanoate: step 1/4. Functionally, catalyzes the condensation of the acetyl group of acetyl-CoA with 3-methyl-2-oxobutanoate (2-oxoisovalerate) to form 3-carboxy-3-hydroxy-4-methylpentanoate (2-isopropylmalate). Redundant to LEU4, responsible for about 20% of alpha-IPMS activity. Involved in leucine synthesis. The polypeptide is 2-isopropylmalate synthase 2, mitochondrial (Saccharomyces cerevisiae (strain ATCC 204508 / S288c) (Baker's yeast)).